Here is a 273-residue protein sequence, read N- to C-terminus: 2,3,4,5-tetrahydropyridine-2,6-dicarboxylate N-succinyltransferase (273 aa).

Substrate-binding residues include Arg-104 and Asp-141.

The protein belongs to the transferase hexapeptide repeat family. In terms of assembly, homotrimer.

The protein resides in the cytoplasm. It carries out the reaction (S)-2,3,4,5-tetrahydrodipicolinate + succinyl-CoA + H2O = (S)-2-succinylamino-6-oxoheptanedioate + CoA. Its pathway is amino-acid biosynthesis; L-lysine biosynthesis via DAP pathway; LL-2,6-diaminopimelate from (S)-tetrahydrodipicolinate (succinylase route): step 1/3. The protein is 2,3,4,5-tetrahydropyridine-2,6-dicarboxylate N-succinyltransferase of Nitrosococcus oceani (strain ATCC 19707 / BCRC 17464 / JCM 30415 / NCIMB 11848 / C-107).